The sequence spans 108 residues: Large ribosomal subunit protein uL22 (108 aa).

The protein belongs to the universal ribosomal protein uL22 family. In terms of assembly, part of the 50S ribosomal subunit.

Functionally, this protein binds specifically to 23S rRNA; its binding is stimulated by other ribosomal proteins, e.g. L4, L17, and L20. It is important during the early stages of 50S assembly. It makes multiple contacts with different domains of the 23S rRNA in the assembled 50S subunit and ribosome. Its function is as follows. The globular domain of the protein is located near the polypeptide exit tunnel on the outside of the subunit, while an extended beta-hairpin is found that lines the wall of the exit tunnel in the center of the 70S ribosome. The protein is Large ribosomal subunit protein uL22 of Nitratiruptor sp. (strain SB155-2).